The chain runs to 47 residues: KIKSGWERLTSESEYACPAIDKFCEDHCAAKKAVGKCDDFKCNCIKL.

Residues 14–47 (EYACPAIDKFCEDHCAAKKAVGKCDDFKCNCIKL) form the BetaSPN-type CS-alpha/beta domain. 3 disulfides stabilise this stretch: C17/C37, C24/C42, and C28/C44.

The protein belongs to the long chain scorpion toxin family. Class 2 subfamily. In terms of tissue distribution, expressed by the venom gland.

The protein localises to the secreted. The protein resides in the target cell membrane. Its function is as follows. Blocks voltage-gated potassium channels. Its application (10 uM) to cells recombinantly expressing channels results in membrane damage and cell lysis. The chain is Potassium channel toxin TcoKIK from Tityus costatus (Brazilian scorpion).